We begin with the raw amino-acid sequence, 262 residues long: 5'-nucleotidase SurE (262 aa).

A divalent metal cation contacts are provided by D11, D12, S43, and N101. Positions 220–229 (SAGDGPKEWP) are enriched in basic and acidic residues. The disordered stretch occupies residues 220 to 246 (SAGDGPKEWPSDVSQIETNSPSLTPIQ). The span at 231–244 (DVSQIETNSPSLTP) shows a compositional bias: polar residues.

This sequence belongs to the SurE nucleotidase family. A divalent metal cation serves as cofactor.

It is found in the cytoplasm. It catalyses the reaction a ribonucleoside 5'-phosphate + H2O = a ribonucleoside + phosphate. In terms of biological role, nucleotidase that shows phosphatase activity on nucleoside 5'-monophosphates. The chain is 5'-nucleotidase SurE from Prochlorococcus marinus (strain SARG / CCMP1375 / SS120).